Here is a 70-residue protein sequence, read N- to C-terminus: Large ribosomal subunit protein bL28 (70 aa).

The segment at 1–26 (MAKRCEVCGKAPRSGNTVSHSDKKSG) is disordered.

The protein belongs to the bacterial ribosomal protein bL28 family.

The sequence is that of Large ribosomal subunit protein bL28 (rpmB) from Thermotoga maritima (strain ATCC 43589 / DSM 3109 / JCM 10099 / NBRC 100826 / MSB8).